Reading from the N-terminus, the 274-residue chain is Large ribosomal subunit protein uL2cy (274 aa).

Disordered regions lie at residues 1–20 (MAIH…AVDS) and 224–274 (NPVD…RRSK).

The protein belongs to the universal ribosomal protein uL2 family. Part of the 50S ribosomal subunit.

Its subcellular location is the plastid. It is found in the chloroplast. The polypeptide is Large ribosomal subunit protein uL2cy (rpl2-B) (Populus alba (White poplar)).